The chain runs to 1383 residues: Palladin (1383 aa).

Disordered stretches follow at residues 1–22 (MSGT…EESK), 52–169 (DSET…SQLC), and 183–238 (FKAA…KSPG). Over residues 78–96 (HPSHKETKLGEHASRRPQD) the composition is skewed to basic and acidic residues. The span at 191–201 (RSPNGESSSPD) shows a compositional bias: polar residues. Ser192 is subject to Phosphoserine. Low complexity predominate over residues 210–223 (QPSALLSASASQSP). Positions 271 to 360 (PRFIQKLRSQ…GSDTTSAEVF (90 aa)) constitute an Ig-like C2-type 1 domain. A disulfide bond links Cys292 and Cys344. Residue Ser401 is modified to Phosphoserine. In terms of domain architecture, Ig-like C2-type 2 spans 440–539 (PPVFTKELQN…ATSTAQLVVT (100 aa)). A disulfide bond links Cys462 and Cys521. Residues 562–566 (FPPPP) form an interaction with VASP region. Disordered regions lie at residues 609–653 (ETNG…LAKP), 673–728 (AGAR…SSGS), and 740–846 (AQNL…RFGH). Ser632 is subject to Phosphoserine. Thr635 bears the Phosphothreonine mark. Ser641 bears the Phosphoserine mark. The interval 646–676 (PPPLLAKPKLDPLKLQQLQNQIRLEQEAGAR) is interaction with LASP1. Residues 676-696 (RQPPPAPRSAPPSPPFPPPPA) form an interaction with SORBS2, SPIN90 and SRC region. Residues 677–697 (QPPPAPRSAPPSPPFPPPPAF) are compositionally biased toward pro residues. Phosphoserine occurs at positions 684, 688, and 728. Residues 745 to 763 (PASGHGTPASSPSSSSLPS) show a composition bias toward low complexity. The segment at 766–831 (SPTPRQFGRA…PPPPPPLPSP (66 aa)) is interaction with EPS8. Residues 796–831 (SPSPPPPPPPVFSPTAAFPVPDVFPLPPPPPPLPSP) are interaction with SORBS2, SPIN90, SRC and PFN1. 2 stretches are compositionally biased toward pro residues: residues 797–807 (PSPPPPPPPVF) and 817–830 (DVFP…PLPS). Positions 819–823 (FPLPP) are interaction with VASP. The segment covering 832 to 846 (GQASHCSSPATRFGH) has biased composition (polar residues). Residues 833-890 (QASHCSSPATRFGHSQTPAAFLSALLPSQPPPAAVNALGLPKGVTPAGFPKKASRTAR) form an interaction with ACTN region. A phosphoserine mark is found at Ser893, Ser979, and Ser984. The Ig-like C2-type 3 domain occupies 1001–1085 (PFFEMKLKHY…MAANPQGRIS (85 aa)). The segment at 1096–1125 (NQRGRSPRSPSGHPHVRRPRSRSRDSGDEN) is disordered. Low complexity predominate over residues 1098–1108 (RGRSPRSPSGH). Phosphoserine occurs at positions 1101, 1104, 1106, and 1116. Ser1118 is subject to Phosphoserine; by PKB/AKT1. Ser1121 is modified (phosphoserine). Ig-like C2-type domains follow at residues 1135-1226 (PHFL…LVVA) and 1233-1324 (PPVF…ARLD). 2 interaction with EZR regions span residues 1137 to 1226 (FLQA…LVVA) and 1236 to 1326 (FIEK…LDVY). Cys1156 and Cys1208 are disulfide-bonded. Ser1352 carries the post-translational modification Phosphoserine.

It belongs to the myotilin/palladin family. Interacts with EPS8. Interacts with LASP1. Interacts with VASP. Interacts with ACTN. Interacts with SORBS2. Interacts with PFN1. Interacts with LPP. Interacts with SPIN90. Interacts with SRC. Interacts with EZR. Interacts with RAI14. Phosphorylated predominantly on serines and, to a lesser extent, on tyrosines. Phosphorylation at Ser-1118 by PKB/AKT1 modulates cytoskeletal organization and cell motility. As to expression, detected in both muscle and non-muscle tissues. High expression in prostate, ovary, colon, and kidney. Not detected in spleen, skeletal muscle, lung and peripheral blood lymphocytes (at protein level). Protein is overexpressed in FA6, HPAF, IMIM-PC2, SUIT-2 and PancTu-II sporadic pancreatic cancer cell lines.

The protein localises to the cytoplasm. Its subcellular location is the cytoskeleton. It localises to the cell junction. It is found in the focal adhesion. The protein resides in the myofibril. The protein localises to the sarcomere. Its subcellular location is the z line. It localises to the cell projection. It is found in the ruffle. The protein resides in the podosome. The protein localises to the lamellipodium. Its subcellular location is the axon. It localises to the growth cone. In terms of biological role, cytoskeletal protein required for organization of normal actin cytoskeleton. Roles in establishing cell morphology, motility, cell adhesion and cell-extracellular matrix interactions in a variety of cell types. May function as a scaffolding molecule with the potential to influence both actin polymerization and the assembly of existing actin filaments into higher-order arrays. Binds to proteins that bind to either monomeric or filamentous actin. Localizes at sites where active actin remodeling takes place, such as lamellipodia and membrane ruffles. Different isoforms may have functional differences. Involved in the control of morphological and cytoskeletal changes associated with dendritic cell maturation. Involved in targeting ACTN to specific subcellular foci. In Homo sapiens (Human), this protein is Palladin (PALLD).